The following is a 109-amino-acid chain: uncharacterized protein (109 aa).

The disordered stretch occupies residues 67–96 (YFGNKLWRPTPRSGQSGQSRPKTGPHGSQR). A compositionally biased stretch (polar residues) spans 78–87 (RSGQSGQSRP).

This is an uncharacterized protein from Saccharomyces cerevisiae (strain ATCC 204508 / S288c) (Baker's yeast).